Reading from the N-terminus, the 149-residue chain is Large ribosomal subunit protein uL24 (149 aa).

This sequence belongs to the universal ribosomal protein uL24 family. In terms of assembly, part of the 50S ribosomal subunit.

Its function is as follows. One of two assembly initiator proteins, it binds directly to the 5'-end of the 23S rRNA, where it nucleates assembly of the 50S subunit. One of the proteins that surrounds the polypeptide exit tunnel on the outside of the subunit. In Nostoc sp. (strain PCC 7120 / SAG 25.82 / UTEX 2576), this protein is Large ribosomal subunit protein uL24.